A 348-amino-acid chain; its full sequence is Protein RecA (348 aa).

Position 67 to 74 (67 to 74 (GPESSGKT)) interacts with ATP.

The protein belongs to the RecA family.

It localises to the cytoplasm. Functionally, can catalyze the hydrolysis of ATP in the presence of single-stranded DNA, the ATP-dependent uptake of single-stranded DNA by duplex DNA, and the ATP-dependent hybridization of homologous single-stranded DNAs. It interacts with LexA causing its activation and leading to its autocatalytic cleavage. The chain is Protein RecA from Clostridioides difficile (strain 630) (Peptoclostridium difficile).